We begin with the raw amino-acid sequence, 270 residues long: Cell division protein DivIB (270 aa).

Over 1-28 the chain is Cytoplasmic; the sequence is MAENKRVISIENRIPELKKYRKKKLVRH. The chain crosses the membrane as a helical span at residues 29 to 49; that stretch reads LAILIGIFVILIAITLYFLSP. The Extracellular segment spans residues 50-270; the sequence is LSKLDKIAVS…AAKEKKETNE (221 aa). The 69-residue stretch at 51–119 folds into the POTRA domain; sequence SKLDKIAVSG…NDVQINITEF (69 aa).

It belongs to the FtsQ/DivIB family. DivIB subfamily.

The protein localises to the cell membrane. In terms of biological role, cell division protein that may be involved in stabilizing or promoting the assembly of the division complex. The polypeptide is Cell division protein DivIB (Listeria monocytogenes serovar 1/2a (strain ATCC BAA-679 / EGD-e)).